The primary structure comprises 357 residues: Protein RecA (357 aa).

Position 67-74 (67-74) interacts with ATP; sequence GPESSGKT. Residues 333–357 are disordered; that stretch reads NELTPATAGNSHDEDAFADEGNEEF. The span at 348-357 shows a compositional bias: acidic residues; that stretch reads AFADEGNEEF.

Belongs to the RecA family.

It is found in the cytoplasm. In terms of biological role, can catalyze the hydrolysis of ATP in the presence of single-stranded DNA, the ATP-dependent uptake of single-stranded DNA by duplex DNA, and the ATP-dependent hybridization of homologous single-stranded DNAs. It interacts with LexA causing its activation and leading to its autocatalytic cleavage. The sequence is that of Protein RecA from Pectobacterium carotovorum subsp. carotovorum (strain PC1).